The following is a 310-amino-acid chain: Protein-L-isoaspartate O-methyltransferase (310 aa).

Disordered stretches follow at residues 1–46 and 60–79; these read MSGE…DKPA and ALPG…TVLK. Residues 14–34 show a composition bias toward basic and acidic residues; that stretch reads EDLKRAPRKSEVRSGSGERHA. The span at 35 to 46 shows a compositional bias: low complexity; sequence ASAVPKAADKPA. Ser-157 is an active-site residue.

The protein belongs to the methyltransferase superfamily. L-isoaspartyl/D-aspartyl protein methyltransferase family.

It localises to the cytoplasm. It carries out the reaction [protein]-L-isoaspartate + S-adenosyl-L-methionine = [protein]-L-isoaspartate alpha-methyl ester + S-adenosyl-L-homocysteine. Its function is as follows. Catalyzes the methyl esterification of L-isoaspartyl residues in peptides and proteins that result from spontaneous decomposition of normal L-aspartyl and L-asparaginyl residues. It plays a role in the repair and/or degradation of damaged proteins. In Burkholderia ambifaria (strain ATCC BAA-244 / DSM 16087 / CCUG 44356 / LMG 19182 / AMMD) (Burkholderia cepacia (strain AMMD)), this protein is Protein-L-isoaspartate O-methyltransferase.